A 496-amino-acid chain; its full sequence is GTPase Der (496 aa).

2 consecutive EngA-type G domains span residues 3–166 (PVVA…FDNL) and 208–381 (IKLA…RSAT). Residues 9–16 (GRPNVGKS), 56–60 (DTGGI), 118–121 (NKVD), 214–221 (GRPNVGKS), 261–265 (DTAGV), and 326–329 (NKWD) each bind GTP. The KH-like domain occupies 382–466 (TRVGTSVLTR…PIRIQFQNSD (85 aa)).

This sequence belongs to the TRAFAC class TrmE-Era-EngA-EngB-Septin-like GTPase superfamily. EngA (Der) GTPase family. As to quaternary structure, associates with the 50S ribosomal subunit.

Functionally, GTPase that plays an essential role in the late steps of ribosome biogenesis. The protein is GTPase Der of Vibrio vulnificus (strain YJ016).